Reading from the N-terminus, the 595-residue chain is Inactive metallocarboxypeptidase ecm14 (595 aa).

The N-terminal stretch at 1–22 is a signal peptide; that stretch reads MYRPDHVFVILCAVFFTGQVTA. The propeptide occupies 23–178; it reads VPAGTGITHP…MIYESQYPSR (156 aa). The Peptidase M14 domain maps to 206–527; sequence NYQPFPVILQ…NSVLVLGHFL (322 aa). Residues H270 and E273 each contribute to the Zn(2+) site. Residues 270–273, R328, and 345–346 each bind substrate; these read HARE and DR. C339 and C362 form a disulfide bridge. N-linked (GlcNAc...) asparagine glycosylation is present at N386. Residue H402 participates in Zn(2+) binding. 403–404 contributes to the substrate binding site; that stretch reads SY.

Belongs to the peptidase M14 family. The cofactor is Zn(2+).

The protein localises to the vacuole. It localises to the secreted. Its function is as follows. Inactive carboxypeptidase that may play a role in cell wall organization and biogenesis. The protein is Inactive metallocarboxypeptidase ecm14 (ecm14) of Talaromyces marneffei (strain ATCC 18224 / CBS 334.59 / QM 7333) (Penicillium marneffei).